The following is a 244-amino-acid chain: Serine-rich single-pass membrane protein 1 (244 aa).

A helical membrane pass occupies residues 35–55 (CGTIGNFLLWYFVIVFVLMFF). 3 disordered regions span residues 65-112 (DKKD…LTPV), 132-191 (QSQF…LGSY), and 213-244 (HSQQ…FSKF). The span at 80-94 (ASKETSYKWQSKDGA) shows a compositional bias: basic and acidic residues. 2 stretches are compositionally biased toward polar residues: residues 97 to 112 (PSQT…LTPV) and 132 to 142 (QSQFNEVNQNQ). Residues 161 to 176 (SWKESESEHHPSPDSI) are compositionally biased toward basic and acidic residues. Polar residues predominate over residues 231–244 (ESSISDINTKFSKF).

It localises to the membrane. The chain is Serine-rich single-pass membrane protein 1 (SSMEM1) from Macaca fascicularis (Crab-eating macaque).